Reading from the N-terminus, the 321-residue chain is Cilia- and flagella-associated protein 161 (321 aa).

The segment at 275–321 is disordered; that stretch reads LSTMLDLPKPPAEDTRALEQEREQVSDPGARSTPDARGCVPQCTLPM. Positions 285–299 are enriched in basic and acidic residues; sequence PAEDTRALEQEREQV.

In terms of assembly, microtubule inner protein component of sperm flagellar doublet microtubules. In terms of tissue distribution, expressed in trachea multiciliated cells.

The protein localises to the cytoplasm. It localises to the cytoskeleton. It is found in the cilium axoneme. Its subcellular location is the flagellum axoneme. Microtubule inner protein (MIP) part of the dynein-decorated doublet microtubules (DMTs) in cilia axoneme, which is required for motile cilia beating. The sequence is that of Cilia- and flagella-associated protein 161 from Bos taurus (Bovine).